The following is a 296-amino-acid chain: ATP-dependent ribose-1-phosphate kinase (296 aa).

D242 acts as the Proton acceptor in catalysis.

It belongs to the carbohydrate kinase PfkB family. Mg(2+) serves as cofactor.

The catalysed reaction is alpha-D-ribose 1-phosphate + ATP = alpha-D-ribose 1,5-bisphosphate + ADP + H(+). With respect to regulation, requires salt for kinase activity. 2.0 M is the optimal KCl concentration. Kinase involved in the non-carboxylating pentose bisphosphate pathway, a nucleoside degradation pathway present in some halophilic archaea. Catalyzes the ATP-dependent phosphorylation of ribose 1-phosphate (R1P) to ribose 1,5-bisphosphate (R15P). Shows weak activity towards various other phosphate acceptors, such as xylulose, 2'-deoxyguanosine and D-ribulose. ATP is the most preferred phosphate donor, followed by CTP and GTP. This Halopiger xanaduensis (strain DSM 18323 / JCM 14033 / SH-6) protein is ATP-dependent ribose-1-phosphate kinase.